Here is a 136-residue protein sequence, read N- to C-terminus: ATP synthase epsilon chain (136 aa).

Residues 106–136 (MEGQPSSPEKLKAQQQLNEARARLQASKTAD) are disordered.

It belongs to the ATPase epsilon chain family. F-type ATPases have 2 components, CF(1) - the catalytic core - and CF(0) - the membrane proton channel. CF(1) has five subunits: alpha(3), beta(3), gamma(1), delta(1), epsilon(1). CF(0) has three main subunits: a, b and c.

It is found in the cellular thylakoid membrane. Produces ATP from ADP in the presence of a proton gradient across the membrane. In Synechococcus sp. (strain CC9605), this protein is ATP synthase epsilon chain.